Here is a 627-residue protein sequence, read N- to C-terminus: Carnitine O-acetyltransferase, mitochondrial (627 aa).

The Proton acceptor role is filled by H336. CoA contacts are provided by residues K418 and 422–429 (KKFKVSPD). (R)-carnitine-binding residues include Y451, S453, and T464. Q553 contacts CoA. The Microbody targeting signal motif lies at 625–627 (PKL).

The protein belongs to the carnitine/choline acetyltransferase family.

The protein localises to the peroxisome. It localises to the mitochondrion inner membrane. The catalysed reaction is (R)-carnitine + acetyl-CoA = O-acetyl-(R)-carnitine + CoA. Functionally, carnitine acetylase is specific for short chain fatty acids. Carnitine acetylase seems to affect the flux through the pyruvate dehydrogenase complex. It may be involved as well in the transport of acetyl-CoA into mitochondria. In Candida tropicalis (Yeast), this protein is Carnitine O-acetyltransferase, mitochondrial (CAT2).